Here is a 479-residue protein sequence, read N- to C-terminus: Sulfate adenylyltransferase subunit 1 (479 aa).

The region spanning 25–239 (KSLLRFLTCG…EVLETVDIQR (215 aa)) is the tr-type G domain. The tract at residues 34 to 41 (GSVDDGKS) is G1. 34-41 (GSVDDGKS) is a binding site for GTP. The tract at residues 92–96 (GITID) is G2. Residues 113-116 (DTPG) form a G3 region. GTP is bound by residues 113–117 (DTPGH) and 168–171 (NKMD). The tract at residues 168–171 (NKMD) is G4. The G5 stretch occupies residues 206-208 (SAL).

It belongs to the TRAFAC class translation factor GTPase superfamily. Classic translation factor GTPase family. CysN/NodQ subfamily. Heterodimer composed of CysD, the smaller subunit, and CysN.

The catalysed reaction is sulfate + ATP + H(+) = adenosine 5'-phosphosulfate + diphosphate. It functions in the pathway sulfur metabolism; hydrogen sulfide biosynthesis; sulfite from sulfate: step 1/3. Its function is as follows. With CysD forms the ATP sulfurylase (ATPS) that catalyzes the adenylation of sulfate producing adenosine 5'-phosphosulfate (APS) and diphosphate, the first enzymatic step in sulfur assimilation pathway. APS synthesis involves the formation of a high-energy phosphoric-sulfuric acid anhydride bond driven by GTP hydrolysis by CysN coupled to ATP hydrolysis by CysD. The chain is Sulfate adenylyltransferase subunit 1 from Salmonella typhimurium (strain LT2 / SGSC1412 / ATCC 700720).